The following is a 113-amino-acid chain: Hydrogenase maturation factor HypA (113 aa).

H2 contacts Ni(2+). Residues C73, C76, C89, and C92 each coordinate Zn(2+).

Belongs to the HypA/HybF family.

Its function is as follows. Involved in the maturation of [NiFe] hydrogenases. Required for nickel insertion into the metal center of the hydrogenase. In Rhodopseudomonas palustris (strain BisA53), this protein is Hydrogenase maturation factor HypA.